We begin with the raw amino-acid sequence, 338 residues long: MKVAVLMSGGIDSTVSALLLREQGYEVTGLTMVHLEREAGEKAARIANELQIEHKVVDLREPFQSAVVDYFCREYEQGHTPNPCVKCNEEIKFGLLLKAALDLGADKVASGHYARIDYDDKSQCYRLMKGVDPRKDQSYFLYRLKQQQLSRLIFPLGGYRKEEVREMARRYHLQLAEEKESQEVCFIPGDYREFIRPHVSYKEGSFLDRTGKILGRHRGIPFYTIGQRRGLAVSAGRPLYVLKIDPEKNQILLGENEVLFSKLLRFKQNHFICSQDFELLIKVKAKIRYAARESEAILHCIEDDIWELVFDEAQRAATPGQSVVYYQGDYVLGGGTIY.

Residues 6 to 13 (LMSGGIDS) and Met32 contribute to the ATP site. Cys87 functions as the Nucleophile in the catalytic mechanism. Cys87 and Cys185 are disulfide-bonded. ATP is bound at residue Gly111. The interval 135-137 (KDQ) is interaction with tRNA. The active-site Cysteine persulfide intermediate is the Cys185. An interaction with tRNA region spans residues 288–289 (RY).

It belongs to the MnmA/TRMU family.

It localises to the cytoplasm. It catalyses the reaction S-sulfanyl-L-cysteinyl-[protein] + uridine(34) in tRNA + AH2 + ATP = 2-thiouridine(34) in tRNA + L-cysteinyl-[protein] + A + AMP + diphosphate + H(+). Its function is as follows. Catalyzes the 2-thiolation of uridine at the wobble position (U34) of tRNA, leading to the formation of s(2)U34. This chain is tRNA-specific 2-thiouridylase MnmA, found in Syntrophomonas wolfei subsp. wolfei (strain DSM 2245B / Goettingen).